The following is a 251-amino-acid chain: Acidic leucine-rich nuclear phosphoprotein 32 family member B (251 aa).

3 LRR repeats span residues 16–40, 43–64, and 65–84; these read PAAV…LTAE, NLEF…PKLP, and KLKK…DMLA. Lys86 is subject to N6-acetyllysine. One copy of the LRR 4 repeat lies at 89–110; it reads NLTHLNLSGNKLKDISTLEPLK. The region spanning 123–161 is the LRRCT domain; that stretch reads CEVTNLNDYRESVFKLLPQLTYLDGYDREDQEAPDSDAE. Over residues 149–233 the composition is skewed to acidic residues; sequence DREDQEAPDS…DEDEDEEEEE (85 aa). A disordered region spans residues 149–251; the sequence is DREDQEAPDS…RETDDEGEDD (103 aa). Ser158 carries the phosphoserine modification. The span at 234–244 shows a compositional bias: basic and acidic residues; that stretch reads GGKGEKRKRET. The Nuclear localization signal motif lies at 239-242; it reads KRKR. At Thr244 the chain carries Phosphothreonine.

The protein belongs to the ANP32 family. As to quaternary structure, interacts with histones H3 and H4. Interacts with KLF5; this interaction induces promoter region-specific histone incorporation and inhibition of histone acetylation by ANP32B. In terms of assembly, (Microbial infection) Interacts with Sendai virus protein M. (Microbial infection) Interacts with Measles virus protein M. As to quaternary structure, (Microbial infection) Interacts with Hendra virus protein M; this interaction promotes nuclear localization of M. In terms of assembly, (Microbial infection) Interacts with influenza virus B protein PB2; this interaction strongly supports influenza B virus replication. Post-translationally, some glutamate residues are glycylated by TTLL8. This modification occurs exclusively on glutamate residues and results in a glycine chain on the gamma-carboxyl group. In terms of processing, directly cleaved by caspase-3/CASP3. In terms of tissue distribution, expressed in heart, lung, pancreas, prostate and in spleen, thymus and placenta.

It localises to the nucleus. The protein resides in the cytoplasm. Its function is as follows. Multifunctional protein that is involved in the regulation of many processes including cell proliferation, apoptosis, cell cycle progression or transcription. Regulates the proliferation of neuronal stem cells, differentiation of leukemic cells and progression from G1 to S phase of the cell cycle. As negative regulator of caspase-3-dependent apoptosis, may act as an antagonist of ANP32A in regulating tissue homeostasis. Exhibits histone chaperone properties, able to recruit histones to certain promoters, thus regulating the transcription of specific genes. Also plays an essential role in the nucleocytoplasmic transport of specific mRNAs via the uncommon nuclear mRNA export receptor XPO1/CRM1. Participates in the regulation of adequate adaptive immune responses by acting on mRNA expression and cell proliferation. Functionally, (Microbial infection) Plays an essential role in influenza A and B viral genome replication. Also plays a role in foamy virus mRNA export from the nucleus to the cytoplasm. The polypeptide is Acidic leucine-rich nuclear phosphoprotein 32 family member B (ANP32B) (Homo sapiens (Human)).